The chain runs to 181 residues: UPF0302 protein ABC1905 (181 aa).

It belongs to the UPF0302 family.

This is UPF0302 protein ABC1905 from Shouchella clausii (strain KSM-K16) (Alkalihalobacillus clausii).